The sequence spans 326 residues: Adenosine receptor A1 (326 aa).

Residues 1–10 (MPPSISAFQA) lie on the Extracellular side of the membrane. The chain crosses the membrane as a helical span at residues 11 to 33 (AYIGIEVLIALVSVPGNVLVIWA). Residues 34–46 (VKVNQALRDATFC) lie on the Cytoplasmic side of the membrane. Residues 47–69 (FIVSLAVADVAVGALVIPLAILI) form a helical membrane-spanning segment. Over 70 to 80 (NIGPQTYFHTC) the chain is Extracellular. A disulfide bond links Cys80 and Cys169. The helical transmembrane segment at 81–102 (LMVACPVLILTQSSILALLAIA) threads the bilayer. The Cytoplasmic portion of the chain corresponds to 103-123 (VDRYLRVKIPLRYKMVVTPRR). A helical membrane pass occupies residues 124–146 (AAVAIAGCWILSFVVGLTPMFGW). The Extracellular portion of the chain corresponds to 147–176 (NNLSAVERAWAANGSMGEPVIKCEFEKVIS). An N-linked (GlcNAc...) asparagine glycan is attached at Asn159. The chain crosses the membrane as a helical span at residues 177–201 (MEYMVYFNFFVWVLPPLLLMVLIYL). Topologically, residues 202–235 (EVFYLIRKQLNKKVSASSGDPQKYYGKELKIAKS) are cytoplasmic. Residues 236–259 (LALILFLFALSWLPLHILNCITLF) traverse the membrane as a helical segment. Topologically, residues 260–267 (CPSCHKPS) are extracellular. The chain crosses the membrane as a helical span at residues 268–292 (ILTYIAIFLTHGNSAMNPIVYAFRI). At 293–326 (QKFRVTFLKIWNDHFRCQPAPPIDEDLPEERPDD) the chain is on the cytoplasmic side. Cys309 carries S-palmitoyl cysteine lipidation.

Belongs to the G-protein coupled receptor 1 family.

It localises to the cell membrane. Functionally, receptor for adenosine. The activity of this receptor is mediated by G proteins which inhibit adenylyl cyclase. In Homo sapiens (Human), this protein is Adenosine receptor A1 (ADORA1).